A 105-amino-acid chain; its full sequence is Heat shock protein HspQ (105 aa).

The protein belongs to the HspQ family.

It is found in the cytoplasm. Functionally, involved in the degradation of certain denaturated proteins, including DnaA, during heat shock stress. The protein is Heat shock protein HspQ of Klebsiella pneumoniae (strain 342).